A 397-amino-acid chain; its full sequence is Cytochrome b (397 aa).

4 consecutive transmembrane segments (helical) span residues phenylalanine 38–methionine 58, tryptophan 82–phenylalanine 104, valine 119–valine 139, and phenylalanine 185–alanine 205. Histidine 88 and histidine 102 together coordinate heme b. Heme b contacts are provided by histidine 189 and histidine 203. Residue histidine 208 participates in a ubiquinone binding. Transmembrane regions (helical) follow at residues phenylalanine 231–phenylalanine 251, alanine 295–lysine 315, isoleucine 327–cysteine 347, and phenylalanine 354–proline 373.

It belongs to the cytochrome b family. As to quaternary structure, the main subunits of complex b-c1 are: cytochrome b, cytochrome c1 and the Rieske protein. The cofactor is heme b.

Its subcellular location is the mitochondrion inner membrane. Its function is as follows. Component of the ubiquinol-cytochrome c reductase complex (complex III or cytochrome b-c1 complex) that is part of the mitochondrial respiratory chain. The b-c1 complex mediates electron transfer from ubiquinol to cytochrome c. Contributes to the generation of a proton gradient across the mitochondrial membrane that is then used for ATP synthesis. This chain is Cytochrome b (MT-CYB), found in Oryza sativa subsp. japonica (Rice).